Consider the following 955-residue polypeptide: Glycine dehydrogenase (decarboxylating) (955 aa).

An N6-(pyridoxal phosphate)lysine modification is found at Lys702.

Belongs to the GcvP family. In terms of assembly, the glycine cleavage system is composed of four proteins: P, T, L and H. Requires pyridoxal 5'-phosphate as cofactor.

The enzyme catalyses N(6)-[(R)-lipoyl]-L-lysyl-[glycine-cleavage complex H protein] + glycine + H(+) = N(6)-[(R)-S(8)-aminomethyldihydrolipoyl]-L-lysyl-[glycine-cleavage complex H protein] + CO2. Its function is as follows. The glycine cleavage system catalyzes the degradation of glycine. The P protein binds the alpha-amino group of glycine through its pyridoxal phosphate cofactor; CO(2) is released and the remaining methylamine moiety is then transferred to the lipoamide cofactor of the H protein. This chain is Glycine dehydrogenase (decarboxylating), found in Stenotrophomonas maltophilia (strain K279a).